The primary structure comprises 380 residues: Cytochrome b (380 aa).

Helical transmembrane passes span 34–54 (FGSL…LLAM), 78–99 (WLIR…YLHI), 114–134 (WNTG…GYVL), and 179–199 (FFAL…IHLT). Residues H84 and H98 each coordinate heme b. The heme b site is built by H183 and H197. H202 serves as a coordination point for a ubiquinone. 4 helical membrane passes run 227–247 (LKDA…ALFS), 289–309 (LGGV…PLLH), 321–341 (LSQL…WIGS), and 348–368 (FIII…ILFP).

This sequence belongs to the cytochrome b family. As to quaternary structure, the cytochrome bc1 complex contains 11 subunits: 3 respiratory subunits (MT-CYB, CYC1 and UQCRFS1), 2 core proteins (UQCRC1 and UQCRC2) and 6 low-molecular weight proteins (UQCRH/QCR6, UQCRB/QCR7, UQCRQ/QCR8, UQCR10/QCR9, UQCR11/QCR10 and a cleavage product of UQCRFS1). This cytochrome bc1 complex then forms a dimer. It depends on heme b as a cofactor.

Its subcellular location is the mitochondrion inner membrane. In terms of biological role, component of the ubiquinol-cytochrome c reductase complex (complex III or cytochrome b-c1 complex) that is part of the mitochondrial respiratory chain. The b-c1 complex mediates electron transfer from ubiquinol to cytochrome c. Contributes to the generation of a proton gradient across the mitochondrial membrane that is then used for ATP synthesis. This Oceanodroma tethys (Wedge-rumped storm-petrel) protein is Cytochrome b (MT-CYB).